A 946-amino-acid chain; its full sequence is Villin-4 (946 aa).

Gelsolin-like repeat units lie at residues 28-109 (NFKP…ETEK), 152-219 (VHVK…EDGK), 274-339 (LEHE…TIMF), and 641-715 (EIHH…PQFF). Disordered regions lie at residues 744–789 (ATPS…GRSP), 801–832 (PSTR…SSKQ), and 844–902 (GPTK…PAPD). Residues 765-777 (QDKSQQRTRSMSH) show a composition bias toward polar residues. Acidic residues predominate over residues 874–883 (SENEPEDDEN). The HP domain maps to 881–946 (DENSTIYPYE…NRLKSDLQLF (66 aa)).

This sequence belongs to the villin/gelsolin family.

The protein resides in the cytoplasm. Its subcellular location is the cytoskeleton. Ca(2+)-regulated actin-binding protein. Binds actin microfilaments (MFs). Involved in actin filament bundling, severing and capping. Caps the barbed end of actin filaments and is able to sever them in a calcium-dependent manner. In Oryza sativa subsp. japonica (Rice), this protein is Villin-4.